Here is a 404-residue protein sequence, read N- to C-terminus: DNA polymerase processivity factor BMRF1 (404 aa).

Positions 1–300 (METTQTLRFK…SVILFNHASE (300 aa)) are homodimerization; DNA binding and DNA polymerase processivity. The tract at residues 301-404 (EAAASTASEP…KVKQAFNPLI (104 aa)) is transcriptional activation. The interval 302 to 404 (AAASTASEPE…KVKQAFNPLI (103 aa)) is disordered. A compositionally biased stretch (pro residues) spans 335-344 (SPSPPPPPRT). Phosphoserine is present on serine 337. Threonine 344 is subject to Phosphothreonine. Residue serine 349 is modified to Phosphoserine. The residue at position 355 (threonine 355) is a Phosphothreonine.

It belongs to the herpesviridae DNA polymerase accessory subunit family. In terms of assembly, homodimer. Two dimers can adopt a tetrameric ring-like structure. Forms a complex with the DNA-binding protein BALF2, the DNA polymerase subunit BALF5, and the alkaline exonuclease BGLF5. Interacts (via N-terminus) with BZLF1 (via bZIP domain); this interaction may inhibit BZLF1-induced transcription of the BMRF1 promoter. Interacts (via C-terminus) with host NuRD complex; this interaction is important for transcriptional activation of EBV promoters and inhibition of the ubiquitination step of DDR signaling. In terms of processing, phosphorylated by the viral BGLF4 kinase.

It is found in the virion tegument. It localises to the host nucleus. Functionally, acts as a DNA polymerase processivity factor; a transcriptional activator for several EBV promoters and inhibits the host DNA damage response (DDR) to double-stranded DNA breaks. Plays an essential role in the viral lytic DNA replication by acting as a polymerase accessory subunit. Stimulates the viral DNA polymerase activity and appears to function with it as a holoenzyme. Increases the processivity of the viral polymerase, probably by acting as a sliding clamp that prevents dissociation of the polymerase from the active template. In addition, BMRF1 transcriptionally activates the oriLyt early BHLF1 promoter. Promotes G1/S cell cycle arrest through p53 induction. The sequence is that of DNA polymerase processivity factor BMRF1 from Epstein-Barr virus (strain AG876) (HHV-4).